We begin with the raw amino-acid sequence, 251 residues long: uncharacterized protein (251 aa).

The protein resides in the mitochondrion. This is an uncharacterized protein from Arabidopsis thaliana (Mouse-ear cress).